The chain runs to 2253 residues: Protein Ycf2 (2253 aa).

1600 to 1607 (GFIGTGRS) serves as a coordination point for ATP.

The protein belongs to the Ycf2 family.

It is found in the plastid. The protein resides in the chloroplast stroma. Functionally, probable ATPase of unknown function. Its presence in a non-photosynthetic plant (Epifagus virginiana) and experiments in tobacco indicate that it has an essential function which is probably not related to photosynthesis. In Nymphaea alba (White water-lily), this protein is Protein Ycf2.